Reading from the N-terminus, the 197-residue chain is Large ribosomal subunit protein bL25 (197 aa).

This sequence belongs to the bacterial ribosomal protein bL25 family. CTC subfamily. As to quaternary structure, part of the 50S ribosomal subunit; part of the 5S rRNA/L5/L18/L25 subcomplex. Contacts the 5S rRNA. Binds to the 5S rRNA independently of L5 and L18.

This is one of the proteins that binds to the 5S RNA in the ribosome where it forms part of the central protuberance. In Carboxydothermus hydrogenoformans (strain ATCC BAA-161 / DSM 6008 / Z-2901), this protein is Large ribosomal subunit protein bL25.